Consider the following 163-residue polypeptide: Phosphopantetheine adenylyltransferase (163 aa).

Residue Thr9 participates in substrate binding. ATP contacts are provided by residues 9 to 10 (TF) and His17. Residues Lys41, Thr73, and Arg87 each contribute to the substrate site. Residues 88-90 (GLR), Glu98, and 123-129 (FSFISSS) each bind ATP.

The protein belongs to the bacterial CoaD family. As to quaternary structure, homohexamer. Requires Mg(2+) as cofactor.

Its subcellular location is the cytoplasm. It catalyses the reaction (R)-4'-phosphopantetheine + ATP + H(+) = 3'-dephospho-CoA + diphosphate. The protein operates within cofactor biosynthesis; coenzyme A biosynthesis; CoA from (R)-pantothenate: step 4/5. Reversibly transfers an adenylyl group from ATP to 4'-phosphopantetheine, yielding dephospho-CoA (dPCoA) and pyrophosphate. The polypeptide is Phosphopantetheine adenylyltransferase (Desulfitobacterium hafniense (strain DSM 10664 / DCB-2)).